The chain runs to 175 residues: Adenine phosphoribosyltransferase (175 aa).

This sequence belongs to the purine/pyrimidine phosphoribosyltransferase family. Homodimer.

It is found in the cytoplasm. The enzyme catalyses AMP + diphosphate = 5-phospho-alpha-D-ribose 1-diphosphate + adenine. It functions in the pathway purine metabolism; AMP biosynthesis via salvage pathway; AMP from adenine: step 1/1. Catalyzes a salvage reaction resulting in the formation of AMP, that is energically less costly than de novo synthesis. The chain is Adenine phosphoribosyltransferase from Maricaulis maris (strain MCS10) (Caulobacter maris).